Reading from the N-terminus, the 327-residue chain is Gibberellin 2-beta-dioxygenase 3 (327 aa).

Positions 173–278 constitute a Fe2OG dioxygenase domain; sequence GSDQVFRVNH…RVSFIYFGGP (106 aa). Y183 contacts 2-oxoglutarate. The Fe cation site is built by H202, D204, and H259. 2-oxoglutarate is bound by residues R269 and S271.

This sequence belongs to the iron/ascorbate-dependent oxidoreductase family. GA2OX subfamily. Requires L-ascorbate as cofactor. It depends on Fe(2+) as a cofactor. As to expression, expressed in roots, shoot apex, leaf blades, leaf sheaths, stems and flowers.

The enzyme catalyses gibberellin A1 + 2-oxoglutarate + O2 = gibberellin A8 + succinate + CO2. Its function is as follows. Catalyzes the 2-beta-hydroxylation of several biologically active gibberellins, leading to the homeostatic regulation of their endogenous level. Catabolism of gibberellins (GAs) plays a central role in plant development. In vitro, converts GA1, GA20, and GA29 to the corresponding 2-beta-hydroxylated products GA8, GA29-catabolite, respectively. This Oryza sativa subsp. japonica (Rice) protein is Gibberellin 2-beta-dioxygenase 3.